The following is a 215-amino-acid chain: Redox-sensing transcriptional repressor Rex (215 aa).

Positions 18 to 57 (LYYRFLKNLHASGKQRVSSAELSDAVKVDSATIRRDFSYF) form a DNA-binding region, H-T-H motif. 92–97 (GVGNLG) contributes to the NAD(+) binding site.

The protein belongs to the transcriptional regulatory Rex family. Homodimer.

It localises to the cytoplasm. Functionally, modulates transcription in response to changes in cellular NADH/NAD(+) redox state. The sequence is that of Redox-sensing transcriptional repressor Rex from Bacillus subtilis (strain 168).